The sequence spans 450 residues: UDP-N-acetylmuramoylalanine--D-glutamate ligase (450 aa).

ATP is bound at residue 119 to 125; sequence GSNGKTT.

Belongs to the MurCDEF family.

Its subcellular location is the cytoplasm. The catalysed reaction is UDP-N-acetyl-alpha-D-muramoyl-L-alanine + D-glutamate + ATP = UDP-N-acetyl-alpha-D-muramoyl-L-alanyl-D-glutamate + ADP + phosphate + H(+). It participates in cell wall biogenesis; peptidoglycan biosynthesis. Functionally, cell wall formation. Catalyzes the addition of glutamate to the nucleotide precursor UDP-N-acetylmuramoyl-L-alanine (UMA). The polypeptide is UDP-N-acetylmuramoylalanine--D-glutamate ligase (Bacillus cereus (strain ATCC 14579 / DSM 31 / CCUG 7414 / JCM 2152 / NBRC 15305 / NCIMB 9373 / NCTC 2599 / NRRL B-3711)).